The sequence spans 201 residues: uncharacterized protein (201 aa).

A helical membrane pass occupies residues 11 to 31 (IWKSLYLLIIVGMLYIGYILI).

The protein localises to the membrane. This is an uncharacterized protein from Rickettsia prowazekii (strain Madrid E).